Consider the following 674-residue polypeptide: Anosmin-1 (674 aa).

Residues 1-21 (MVRRAPGASLALLLWVTAVSC) form the signal peptide. 4 disulfide bridges follow: Cys-47–Cys-71, Cys-80–Cys-99, Cys-84–Cys-95, and Cys-110–Cys-114. N-linked (GlcNAc...) asparagine glycosylation occurs at Asn-65. Residues 121 to 170 (LSVKQGDCPAPEKASGFAAACFESCEADSECSGVKKCCSNGCGHTCQVPK) enclose the WAP domain. 4 consecutive Fibronectin type-III domains span residues 180–281 (PRKE…SKDP), 286–392 (APSN…TTQD), 418–515 (RRKP…FFVT), and 545–652 (KPEN…DLPP). N-linked (GlcNAc...) asparagine glycosylation is found at Asn-203 and Asn-294. Over residues 388–402 (STTQDNRNNNEQTSV) the composition is skewed to polar residues. The segment at 388–413 (STTQDNRNNNEQTSVEKPPKGVVDPY) is disordered. N-linked (GlcNAc...) asparagine glycosylation is found at Asn-465, Asn-548, and Asn-559. Residues 655 to 674 (PHRPHLKHHPHRYKPPPEKY) form a disordered region. Over residues 656 to 668 (HRPHLKHHPHRYK) the composition is skewed to basic residues.

It localises to the cell surface. May be an adhesion-like molecule with anti-protease activity. The protein is Anosmin-1 of Coturnix japonica (Japanese quail).